The chain runs to 375 residues: Prophage integrase IntE (375 aa).

In terms of domain architecture, Core-binding (CB) spans 82–167; the sequence is ITTSTWLDRY…VLIDVFKEAQ (86 aa). In terms of domain architecture, Tyr recombinase spans 189–375; sequence ITRQRLSLEE…RGKGWSKVAL (187 aa). Catalysis depends on residues Arg-226, Lys-249, His-330, Arg-333, and His-353. A disordered region spans residues 350-375; that stretch reads LLGHKTQQQTDRYHDDRGKGWSKVAL. Tyr-362 (O-(3'-phospho-DNA)-tyrosine intermediate) is an active-site residue.

This sequence belongs to the 'phage' integrase family.

Functionally, integrase from the cryptic lambdoid prophage e14. Integrase is necessary for integration of the phage into the host genome by site-specific recombination. In conjunction with excisionase, integrase is also necessary for excision of the prophage from the host genome. The chain is Prophage integrase IntE (intE) from Escherichia coli (strain K12).